Here is a 145-residue protein sequence, read N- to C-terminus: Small ribosomal subunit protein uS19 (145 aa).

Position 2 is an N-acetylalanine (Ala2). Residue Lys108 forms a Glycyl lysine isopeptide (Lys-Gly) (interchain with G-Cter in SUMO2) linkage.

Belongs to the universal ribosomal protein uS19 family. Component of the small ribosomal subunit.

It is found in the cytoplasm. Its function is as follows. Component of the small ribosomal subunit. The ribosome is a large ribonucleoprotein complex responsible for the synthesis of proteins in the cell. This chain is Small ribosomal subunit protein uS19 (RPS15), found in Oryctolagus cuniculus (Rabbit).